Consider the following 212-residue polypeptide: Urease accessory protein UreG 2 (212 aa).

A GTP-binding site is contributed by 11 to 18; the sequence is GPVGSGKT.

Belongs to the SIMIBI class G3E GTPase family. UreG subfamily. In terms of assembly, homodimer. UreD, UreF and UreG form a complex that acts as a GTP-hydrolysis-dependent molecular chaperone, activating the urease apoprotein by helping to assemble the nickel containing metallocenter of UreC. The UreE protein probably delivers the nickel.

The protein resides in the cytoplasm. Facilitates the functional incorporation of the urease nickel metallocenter. This process requires GTP hydrolysis, probably effectuated by UreG. This is Urease accessory protein UreG 2 from Brucella abortus (strain 2308).